The primary structure comprises 228 residues: 2-C-methyl-D-erythritol 4-phosphate cytidylyltransferase (228 aa).

The protein belongs to the IspD/TarI cytidylyltransferase family. IspD subfamily.

It catalyses the reaction 2-C-methyl-D-erythritol 4-phosphate + CTP + H(+) = 4-CDP-2-C-methyl-D-erythritol + diphosphate. The protein operates within isoprenoid biosynthesis; isopentenyl diphosphate biosynthesis via DXP pathway; isopentenyl diphosphate from 1-deoxy-D-xylulose 5-phosphate: step 2/6. Functionally, catalyzes the formation of 4-diphosphocytidyl-2-C-methyl-D-erythritol from CTP and 2-C-methyl-D-erythritol 4-phosphate (MEP). The sequence is that of 2-C-methyl-D-erythritol 4-phosphate cytidylyltransferase from Actinobacillus pleuropneumoniae serotype 3 (strain JL03).